A 392-amino-acid polypeptide reads, in one-letter code: uncharacterized protein (392 aa).

This sequence belongs to the ROK (NagC/XylR) family.

This is an uncharacterized protein from Sinorhizobium fredii (strain NBRC 101917 / NGR234).